A 500-amino-acid chain; its full sequence is Zinc finger and BTB domain-containing protein 34 (500 aa).

In terms of domain architecture, BTB spans 32 to 96 (CDIIVHIQGQ…CYTGRMSLQL (65 aa)). Ser164 carries the post-translational modification Phosphoserine. Residues 164-209 (SPPYCSQGRQPTASSDLRMETTPSKALRSRLQEEGHSDRGSSGSVS) are disordered. Over residues 193–202 (RLQEEGHSDR) the composition is skewed to basic and acidic residues. Glycyl lysine isopeptide (Lys-Gly) (interchain with G-Cter in SUMO2) cross-links involve residues Lys235 and Lys237. Residues 236-245 (VKMEKSDRPS) are compositionally biased toward basic and acidic residues. Disordered regions lie at residues 236-256 (VKMEKSDRPSCSDSSSLGDDG) and 341-360 (SDSEAMMNNPGYESSPRERS). 2 consecutive C2H2-type zinc fingers follow at residues 372–394 (LICIYCGKSFNQKGSLDRHMRLH) and 400–422 (FVCKFCGKKYTRKDQLEYHIRGH). Lys426 participates in a covalent cross-link: Glycyl lysine isopeptide (Lys-Gly) (interchain with G-Cter in SUMO2). The C2H2-type 3 zinc-finger motif lies at 428-451 (FRCEICGKCFPFQGTLNQHLRKNH). Ser463 is modified (phosphoserine). Residue Lys474 forms a Glycyl lysine isopeptide (Lys-Gly) (interchain with G-Cter in SUMO2) linkage. The interval 478-500 (DASASEMGLDSRMEIHTVSDAPD) is disordered.

As to expression, expressed in several tissues, including heart, brain, thymus, skeletal muscle, small intestine, testis, kidney, placenta, peripheral blood cells and adult and fetal liver.

The protein resides in the nucleus. In terms of biological role, may be a transcriptional repressor. This chain is Zinc finger and BTB domain-containing protein 34 (ZBTB34), found in Homo sapiens (Human).